We begin with the raw amino-acid sequence, 211 residues long: MVIMGNELQLENKILKGTTTVGIRVNDGVILAADRRASAGFFVANKMVRKVLYITDKIGITTAGSVADLQFIYDVLKNIYHYNSITKYGPISIKGIATRLANVLSATKYFPYIVQILIGGYDDQPRLFNLDYLGDITEENYVATGSGSPVAMGVLEDEYNPKMTLDEAADLAKRAVFSAIKRDSFTGTGVIVAKIHSKGHEELEFYLNKKM.

Positions 1–17 (MVIMGNELQLENKILKG) are cleaved as a propeptide — removed in mature form; by autocatalysis. Residue threonine 18 is the Nucleophile of the active site.

It belongs to the peptidase T1B family. The 20S proteasome core is composed of 14 alpha and 14 beta subunits that assemble into four stacked heptameric rings, resulting in a barrel-shaped structure. The two inner rings, each composed of seven catalytic beta subunits, are sandwiched by two outer rings, each composed of seven alpha subunits. The catalytic chamber with the active sites is on the inside of the barrel. Has a gated structure, the ends of the cylinder being occluded by the N-termini of the alpha-subunits. Is capped at one or both ends by the proteasome regulatory ATPase, PAN.

Its subcellular location is the cytoplasm. It carries out the reaction Cleavage of peptide bonds with very broad specificity.. Its activity is regulated as follows. The formation of the proteasomal ATPase PAN-20S proteasome complex, via the docking of the C-termini of PAN into the intersubunit pockets in the alpha-rings, triggers opening of the gate for substrate entry. Interconversion between the open-gate and close-gate conformations leads to a dynamic regulation of the 20S proteasome proteolysis activity. Component of the proteasome core, a large protease complex with broad specificity involved in protein degradation. The protein is Proteasome subunit beta 2 of Saccharolobus solfataricus (strain 98/2) (Sulfolobus solfataricus).